The following is a 473-amino-acid chain: Spliceosome-associated protein CWC27 homolog (473 aa).

S2 carries the post-translational modification N-acetylserine. Residues 11-166 form the PPIase cyclophilin-type domain; sequence TNGKVLLKTT…NPHKIKSCEV (156 aa). Residues 177 to 193 show a composition bias toward basic and acidic residues; the sequence is REIKRPKKEKPEEEVKK. Disordered stretches follow at residues 177–386 and 399–473; these read REIK…EDQT and QAIA…KERR. Positions 206–230 form a coiled coil; it reads SFGEEAEEEEEEVNRVSQSMKGKSK. Over residues 231 to 241 the composition is skewed to basic and acidic residues; the sequence is SSHDLLKDDPH. Residues 257-266 show a composition bias toward acidic residues; the sequence is GDLDDGGEGE. Composition is skewed to basic and acidic residues over residues 267–287, 305–348, and 360–372; these read SAEHDEYIDGDEKNLMRERIA, EVEK…KRSE, and EYRREKQKYEALR. Positions 305–378 form a coiled coil; that stretch reads EVEKKSVNRS…EALRKQQSKK (74 aa). The residue at position 347 (S347) is a Phosphoserine. The segment covering 405 to 419 has biased composition (acidic residues); it reads PENDIPETEVEDDEG. Composition is skewed to basic and acidic residues over residues 426–438 and 458–473; these read QFEDKSRKVKDAS and RREESKKLMREKKERR.

The protein belongs to the cyclophilin-type PPIase family. Part of the activated spliceosome B/catalytic step 1 spliceosome, one of the forms of the spliceosome which has a well-formed active site but still cannot catalyze the branching reaction and is composed at least of 52 proteins, the U2, U5 and U6 snRNAs and the pre-mRNA. Recruited during early steps of activated spliceosome B maturation, it is probably one of the first proteins released from this complex as he matures to the spliceosome C complex. Component of the minor spliceosome, which splices U12-type introns.

The protein localises to the nucleus. Its function is as follows. As part of the spliceosome, plays a role in pre-mRNA splicing. Probable inactive PPIase with no peptidyl-prolyl cis-trans isomerase activity. As a component of the minor spliceosome, involved in the splicing of U12-type introns in pre-mRNAs. This Pongo abelii (Sumatran orangutan) protein is Spliceosome-associated protein CWC27 homolog.